The primary structure comprises 418 residues: eIF5-mimic protein 2-B (418 aa).

A compositionally biased stretch (polar residues) spans 1–15 (MSYQKQQKPTLTGQR). The segment at 1 to 29 (MSYQKQQKPTLTGQRFKTRKRDEKERFDP) is disordered. In terms of domain architecture, W2 spans 247–414 (NQQSLGARKE…KNAEEESESE (168 aa)).

The protein belongs to the BZW family.

Functionally, translation initiation regulator which may repress repeat-associated non-AUG (RAN) initiated translation probably by acting as a competitive inhibitor of eukaryotic translation initiation factor 5 (EIF5) function. Enhances histone H4 gene transcription but does not seem to bind DNA directly. The chain is eIF5-mimic protein 2-B (bzw1b) from Danio rerio (Zebrafish).